Reading from the N-terminus, the 705-residue chain is Translation initiation factor IF-2 (705 aa).

Residues 40–124 (DDQIKALDKK…QPAAPKEIPS (85 aa)) are disordered. Residues 41–58 (DQIKALDKKFKKEQKNDN) show a composition bias toward basic and acidic residues. The span at 59–77 (KQSTQNNHQKSNNQNQNKG) shows a compositional bias: low complexity. The span at 94–108 (KGNKKNNRNNKKNNK) shows a compositional bias: basic residues. Positions 207-376 (ERPAVVTIMG…GLVAEVQELK (170 aa)) constitute a tr-type G domain. The segment at 216–223 (GHVDHGKT) is G1. 216-223 (GHVDHGKT) contacts GTP. The tract at residues 241–245 (GITQH) is G2. Residues 262 to 265 (DTPG) form a G3 region. GTP contacts are provided by residues 262–266 (DTPGH) and 316–319 (NKID). A G4 region spans residues 316–319 (NKID). A G5 region spans residues 352–354 (SAL).

Belongs to the TRAFAC class translation factor GTPase superfamily. Classic translation factor GTPase family. IF-2 subfamily.

It localises to the cytoplasm. One of the essential components for the initiation of protein synthesis. Protects formylmethionyl-tRNA from spontaneous hydrolysis and promotes its binding to the 30S ribosomal subunits. Also involved in the hydrolysis of GTP during the formation of the 70S ribosomal complex. This is Translation initiation factor IF-2 from Staphylococcus aureus (strain USA300).